The chain runs to 330 residues: Beta-ketoacyl-[acyl-carrier-protein] synthase III (330 aa).

Active-site residues include C114 and H255. The segment at 256-260 (QANQR) is ACP-binding. N285 is an active-site residue.

It belongs to the thiolase-like superfamily. FabH family. Homodimer.

The protein localises to the cytoplasm. It carries out the reaction malonyl-[ACP] + acetyl-CoA + H(+) = 3-oxobutanoyl-[ACP] + CO2 + CoA. It participates in lipid metabolism; fatty acid biosynthesis. Its function is as follows. Catalyzes the condensation reaction of fatty acid synthesis by the addition to an acyl acceptor of two carbons from malonyl-ACP. Catalyzes the first condensation reaction which initiates fatty acid synthesis and may therefore play a role in governing the total rate of fatty acid production. Possesses both acetoacetyl-ACP synthase and acetyl transacylase activities. Its substrate specificity determines the biosynthesis of branched-chain and/or straight-chain of fatty acids. The protein is Beta-ketoacyl-[acyl-carrier-protein] synthase III of Trichormus variabilis (strain ATCC 29413 / PCC 7937) (Anabaena variabilis).